The following is an 837-amino-acid chain: Striatin-interacting protein 1 (837 aa).

An N-acetylmethionine modification is found at Met-1. Disordered stretches follow at residues 1-67 and 333-423; these read MEPA…ESPD and AASP…KGLP. Residues 18-35 show a composition bias toward pro residues; the sequence is PQPPPPPPPATAQPPPGA. Basic and acidic residues predominate over residues 47-60; the sequence is KAREFNRNQRKDSE. Phosphoserine occurs at positions 59, 335, and 339. Basic and acidic residues predominate over residues 356–377; sequence KALIKQDNLDAFNERDPYKADD. Positions 378-391 are enriched in acidic residues; the sequence is SREEEEENDDDSSL. A Phosphoserine modification is found at Ser-788. Residues 796-837 form a required for STRIPAK core complex formation region; sequence DNCLQSVLGQRVDLPEDFQMNYDLWLEREVFSKPISWEELLQ.

The protein belongs to the STRIP family. As to quaternary structure, part of the core of STRIPAK complexes composed of PP2A catalytic and scaffolding subunits, the striatins (PP2A regulatory subunits), the striatin-associated proteins MOB4, STRIP1 and STRIP2, PDCD10 and members of the STE20 kinases, such as STK24 and STK26. The STRIPAK complex can be extended by adapter proteins such as SLMAP:SIKE1, CTTNBP2 or CTTNBP2NL. Interacts with CDC42BPB. Interacts with CTTNBP2NL.

The protein localises to the cytoplasm. In terms of biological role, plays a role in the regulation of cell morphology and cytoskeletal organization. Required in the cortical actin filament dynamics and cell shape. Part of the striatin-interacting phosphatase and kinase (STRIPAK) complexes. STRIPAK complexes have critical roles in protein (de)phosphorylation and are regulators of multiple signaling pathways including Hippo, MAPK, nuclear receptor and cytoskeleton remodeling. Different types of STRIPAK complexes are involved in a variety of biological processes such as cell growth, differentiation, apoptosis, metabolism and immune regulation. The chain is Striatin-interacting protein 1 (Strip1) from Mus musculus (Mouse).